The following is a 134-amino-acid chain: Thioredoxin H2-2 (134 aa).

The interval 1 to 20 (MGSFFSTMFTPPPAADDGGD) is disordered. Positions 3 to 130 (SFFSTMFTPP…LERKVNMFIS (128 aa)) constitute a Thioredoxin domain. Catalysis depends on nucleophile residues Cys-56 and Cys-59. Residues Cys-56 and Cys-59 are joined by a disulfide bond.

The protein belongs to the thioredoxin family. Plant H-type subfamily.

Its subcellular location is the cytoplasm. In terms of biological role, probable thiol-disulfide oxidoreductase that may be involved in the redox regulation of a number of cytosolic enzymes. The sequence is that of Thioredoxin H2-2 from Oryza sativa subsp. japonica (Rice).